The sequence spans 206 residues: Large ribosomal subunit protein uL4 (206 aa).

This sequence belongs to the universal ribosomal protein uL4 family. As to quaternary structure, part of the 50S ribosomal subunit.

In terms of biological role, one of the primary rRNA binding proteins, this protein initially binds near the 5'-end of the 23S rRNA. It is important during the early stages of 50S assembly. It makes multiple contacts with different domains of the 23S rRNA in the assembled 50S subunit and ribosome. Forms part of the polypeptide exit tunnel. This chain is Large ribosomal subunit protein uL4, found in Methylocella silvestris (strain DSM 15510 / CIP 108128 / LMG 27833 / NCIMB 13906 / BL2).